Reading from the N-terminus, the 501-residue chain is Phenylalanine--tRNA ligase alpha subunit (501 aa).

L-phenylalanine is bound by residues T340 and F423. E425 is a Mg(2+) binding site. F448 serves as a coordination point for L-phenylalanine.

This sequence belongs to the class-II aminoacyl-tRNA synthetase family. Phe-tRNA synthetase alpha subunit type 2 subfamily. Tetramer of two alpha and two beta subunits. Mg(2+) serves as cofactor.

It is found in the cytoplasm. The catalysed reaction is tRNA(Phe) + L-phenylalanine + ATP = L-phenylalanyl-tRNA(Phe) + AMP + diphosphate + H(+). This Methanococcus maripaludis (strain C5 / ATCC BAA-1333) protein is Phenylalanine--tRNA ligase alpha subunit.